The primary structure comprises 320 residues: Ferrochelatase (320 aa).

The Fe cation site is built by His194 and Glu275.

This sequence belongs to the ferrochelatase family. In terms of assembly, monomer.

The protein resides in the cytoplasm. It carries out the reaction heme b + 2 H(+) = protoporphyrin IX + Fe(2+). Its pathway is porphyrin-containing compound metabolism; protoheme biosynthesis; protoheme from protoporphyrin-IX: step 1/1. Functionally, catalyzes the ferrous insertion into protoporphyrin IX. The polypeptide is Ferrochelatase (Shigella dysenteriae serotype 1 (strain Sd197)).